A 446-amino-acid chain; its full sequence is Putrescine N-hydroxylase (446 aa).

Positions 17, 37, 38, 39, 44, and 45 each coordinate FAD. NADP(+)-binding residues include Thr-54, Gln-56, and Arg-98. Gln-56 contacts FAD. Residue Val-121 participates in FAD binding. The NADP(+) site is built by Ser-199, Lys-223, Tyr-267, and Leu-301. FAD-binding residues include Asn-378, Pro-389, and Leu-391.

Belongs to the lysine N(6)-hydroxylase/L-ornithine N(5)-oxygenase family. As to quaternary structure, homotetramer. FAD serves as cofactor.

The catalysed reaction is putrescine + NADPH + O2 = N-hydroxyputrescine + NADP(+) + H2O. It functions in the pathway siderophore biosynthesis. Its function is as follows. N-hydroxylating monooxygenase involved in the biosynthesis of fimsbactin A, the major siderophore produced by A.baumannii. Catalyzes the N-hydroxylation of the aliphatic diamine putrescine into N-hydroxyputrescine (NHP). Putrescine is the preferred substrate, but the enzyme can also catalyze the N-hydroxylation of cadaverine, with 4-fold lower catalytic efficiency. Cannot use lysine or ornithine as substrates. Uses both NADPH and NADH as the reducing cofactor with a preference for NADPH. The protein is Putrescine N-hydroxylase of Acinetobacter baumannii (strain ATCC 17978 / DSM 105126 / CIP 53.77 / LMG 1025 / NCDC KC755 / 5377).